A 295-amino-acid polypeptide reads, in one-letter code: Pyridoxal 5'-phosphate synthase subunit PdxS (295 aa).

Asp-25 is a binding site for D-ribose 5-phosphate. The Schiff-base intermediate with D-ribose 5-phosphate role is filled by Lys-82. Gly-154 lines the D-ribose 5-phosphate pocket. Arg-166 contributes to the D-glyceraldehyde 3-phosphate binding site. Residues Gly-215 and 236 to 237 contribute to the D-ribose 5-phosphate site; that span reads GS.

Belongs to the PdxS/SNZ family. As to quaternary structure, in the presence of PdxT, forms a dodecamer of heterodimers.

The enzyme catalyses aldehydo-D-ribose 5-phosphate + D-glyceraldehyde 3-phosphate + L-glutamine = pyridoxal 5'-phosphate + L-glutamate + phosphate + 3 H2O + H(+). Its pathway is cofactor biosynthesis; pyridoxal 5'-phosphate biosynthesis. Its function is as follows. Catalyzes the formation of pyridoxal 5'-phosphate from ribose 5-phosphate (RBP), glyceraldehyde 3-phosphate (G3P) and ammonia. The ammonia is provided by the PdxT subunit. Can also use ribulose 5-phosphate and dihydroxyacetone phosphate as substrates, resulting from enzyme-catalyzed isomerization of RBP and G3P, respectively. This chain is Pyridoxal 5'-phosphate synthase subunit PdxS, found in Haemophilus ducreyi (strain 35000HP / ATCC 700724).